The primary structure comprises 120 residues: Prefoldin subunit beta (120 aa).

The protein belongs to the prefoldin subunit beta family. As to quaternary structure, heterohexamer of two alpha and four beta subunits.

The protein resides in the cytoplasm. Functionally, molecular chaperone capable of stabilizing a range of proteins. Seems to fulfill an ATP-independent, HSP70-like function in archaeal de novo protein folding. The sequence is that of Prefoldin subunit beta from Methanospirillum hungatei JF-1 (strain ATCC 27890 / DSM 864 / NBRC 100397 / JF-1).